A 94-amino-acid polypeptide reads, in one-letter code: Large ribosomal subunit protein bL27 (94 aa).

The propeptide occupies 1–9 (MLKLNLQFF).

It belongs to the bacterial ribosomal protein bL27 family. In terms of processing, the N-terminus is cleaved by ribosomal processing cysteine protease Prp.

This chain is Large ribosomal subunit protein bL27, found in Staphylococcus aureus (strain Mu3 / ATCC 700698).